A 163-amino-acid chain; its full sequence is Probable phosphotransferase enzyme IIB component M6_Spy0801 (163 aa).

Positions 1-163 (MITQIRVDDR…TKVHLSQLVN (163 aa)) constitute a PTS EIIB type-4 domain. The Pros-phosphohistidine intermediate role is filled by His-13.

The protein resides in the cytoplasm. In terms of biological role, the phosphoenolpyruvate-dependent sugar phosphotransferase system (sugar PTS), a major carbohydrate active -transport system, catalyzes the phosphorylation of incoming sugar substrates concomitantly with their translocation across the cell membrane. The chain is Probable phosphotransferase enzyme IIB component M6_Spy0801 from Streptococcus pyogenes serotype M6 (strain ATCC BAA-946 / MGAS10394).